A 273-amino-acid polypeptide reads, in one-letter code: MGIRKVNPTSAGRRFQTYATFEELSNVEPEKSLLEPLRRSGGRNASGRVTSWHRGGGHKRRYRIIDFKRNKENIPATVASIEYDPNRSSHIALLKYADGEKRYIIAPVGLSVGDTVLTGAEADIKPGNCLRLANMPLGTIIHNVELKPGKGGQLARSAGSSIQLIAKEGTHAILRLPSSEMRMVPISCKATVGQVGNIDHENLSLGKAGRKRWLGKRPHVRGVAMNPVDHPMGGGEGRSSGGRHPCTPWGVPTKGYRTRKSKRSDKLIVHRRK.

The interval 222-273 (GVAMNPVDHPMGGGEGRSSGGRHPCTPWGVPTKGYRTRKSKRSDKLIVHRRK) is disordered. A compositionally biased stretch (basic and acidic residues) spans 264–273 (SDKLIVHRRK).

This sequence belongs to the universal ribosomal protein uL2 family. Part of the 50S ribosomal subunit. Forms a bridge to the 30S subunit in the 70S ribosome.

Its function is as follows. One of the primary rRNA binding proteins. Required for association of the 30S and 50S subunits to form the 70S ribosome, for tRNA binding and peptide bond formation. It has been suggested to have peptidyltransferase activity; this is somewhat controversial. Makes several contacts with the 16S rRNA in the 70S ribosome. This is Large ribosomal subunit protein uL2 from Syntrophobacter fumaroxidans (strain DSM 10017 / MPOB).